The chain runs to 227 residues: Cytochrome c oxidase subunit 2 (227 aa).

Residues 1 to 14 (MAHATQVGLQDATS) are Mitochondrial intermembrane-facing. The helical transmembrane segment at 15–45 (PIMEELISFHDHALMIIFLISFLVLYALFLT) threads the bilayer. The Mitochondrial matrix segment spans residues 46-59 (LTTKLTNTNITDAQ). Residues 60 to 87 (EMETVWTILPAIILVLIALPSLRILYLT) traverse the membrane as a helical segment. Residues 88–227 (DEINDPSFTI…IFEMGPVFTL (140 aa)) are Mitochondrial intermembrane-facing. Residues His161, Cys196, Glu198, Cys200, His204, and Met207 each contribute to the Cu cation site. Residue Glu198 participates in Mg(2+) binding.

This sequence belongs to the cytochrome c oxidase subunit 2 family. Component of the cytochrome c oxidase (complex IV, CIV), a multisubunit enzyme composed of 14 subunits. The complex is composed of a catalytic core of 3 subunits MT-CO1, MT-CO2 and MT-CO3, encoded in the mitochondrial DNA, and 11 supernumerary subunits COX4I, COX5A, COX5B, COX6A, COX6B, COX6C, COX7A, COX7B, COX7C, COX8 and NDUFA4, which are encoded in the nuclear genome. The complex exists as a monomer or a dimer and forms supercomplexes (SCs) in the inner mitochondrial membrane with NADH-ubiquinone oxidoreductase (complex I, CI) and ubiquinol-cytochrome c oxidoreductase (cytochrome b-c1 complex, complex III, CIII), resulting in different assemblies (supercomplex SCI(1)III(2)IV(1) and megacomplex MCI(2)III(2)IV(2)). Found in a complex with TMEM177, COA6, COX18, COX20, SCO1 and SCO2. Interacts with TMEM177 in a COX20-dependent manner. Interacts with COX20. Interacts with COX16. The cofactor is Cu cation.

Its subcellular location is the mitochondrion inner membrane. It catalyses the reaction 4 Fe(II)-[cytochrome c] + O2 + 8 H(+)(in) = 4 Fe(III)-[cytochrome c] + 2 H2O + 4 H(+)(out). Functionally, component of the cytochrome c oxidase, the last enzyme in the mitochondrial electron transport chain which drives oxidative phosphorylation. The respiratory chain contains 3 multisubunit complexes succinate dehydrogenase (complex II, CII), ubiquinol-cytochrome c oxidoreductase (cytochrome b-c1 complex, complex III, CIII) and cytochrome c oxidase (complex IV, CIV), that cooperate to transfer electrons derived from NADH and succinate to molecular oxygen, creating an electrochemical gradient over the inner membrane that drives transmembrane transport and the ATP synthase. Cytochrome c oxidase is the component of the respiratory chain that catalyzes the reduction of oxygen to water. Electrons originating from reduced cytochrome c in the intermembrane space (IMS) are transferred via the dinuclear copper A center (CU(A)) of subunit 2 and heme A of subunit 1 to the active site in subunit 1, a binuclear center (BNC) formed by heme A3 and copper B (CU(B)). The BNC reduces molecular oxygen to 2 water molecules using 4 electrons from cytochrome c in the IMS and 4 protons from the mitochondrial matrix. The protein is Cytochrome c oxidase subunit 2 (MT-CO2) of Hylobates lar (Lar gibbon).